The sequence spans 29 residues: Kunitz-type serine protease inhibitor RsTIQ7 (29 aa).

The 21-residue stretch at 6-26 (QCVPTADPGPCKAYIPMWWYN) folds into the BPTI/Kunitz inhibitor domain.

Serine protease inhibitor. Inhibits trypsin, elastase, plasmin and kallikrein. The protein is Kunitz-type serine protease inhibitor RsTIQ7 of Rhipicephalus sanguineus (Brown dog tick).